A 510-amino-acid polypeptide reads, in one-letter code: GMP synthase [glutamine-hydrolyzing] (510 aa).

A Glutamine amidotransferase type-1 domain is found at 3 to 194 (QILILDFGSQ…ARVICGYKEK (192 aa)). Cysteine 80 acts as the Nucleophile in catalysis. Residues histidine 168 and glutamate 170 contribute to the active site. A GMPS ATP-PPase domain is found at 195 to 385 (WTPASIMTAS…LGLGSEIVDI (191 aa)). Position 222-228 (222-228 (SGGVDSS)) interacts with ATP.

As to quaternary structure, homodimer.

It carries out the reaction XMP + L-glutamine + ATP + H2O = GMP + L-glutamate + AMP + diphosphate + 2 H(+). The protein operates within purine metabolism; GMP biosynthesis; GMP from XMP (L-Gln route): step 1/1. In terms of biological role, catalyzes the synthesis of GMP from XMP. The sequence is that of GMP synthase [glutamine-hydrolyzing] from Elusimicrobium minutum (strain Pei191).